A 61-amino-acid chain; its full sequence is Short neurotoxin 1 (61 aa).

4 cysteine pairs are disulfide-bonded: Cys-3–Cys-23, Cys-17–Cys-40, Cys-42–Cys-53, and Cys-54–Cys-59.

The protein belongs to the three-finger toxin family. Short-chain subfamily. Type I alpha-neurotoxin sub-subfamily. In terms of tissue distribution, expressed by the venom gland.

The protein localises to the secreted. Functionally, binds with high affinity to muscular nicotinic acetylcholine receptors (nAChRs) (tested on Torpedo marmorata AChR, Kd=0.07 nM) and with low affinity to neuronal alpha-7/CHRNA7 nAChRs (tested on chimeric receptor, Kd=3 uM) and inhibit acetylcholine from binding to the receptor, thereby impairing neuromuscular transmission. Produces peripheral paralysis by blocking neuromuscular transmission at the postsynaptic site. The polypeptide is Short neurotoxin 1 (Naja pallida (Red spitting cobra)).